The primary structure comprises 994 residues: Translocase of chloroplast 108, chloroplastic (994 aa).

Disordered regions lie at residues 14–61 (KEAS…EDEP), 84–124 (TTDL…DPSV), and 152–287 (AVDG…DETR). Composition is skewed to polar residues over residues 37–53 (GETT…ANES) and 84–98 (TTDL…TPSN). Over residues 99-121 (AEKESPEATEVRIVEEGKLEKAD) the composition is skewed to basic and acidic residues. Over residues 166-197 (NDGDTDANTADEDNENDEDDVDEDEDEDDADM) the composition is skewed to acidic residues. The span at 249-268 (ASDSPGRNTQRPNGALSTQI) shows a compositional bias: polar residues. The segment covering 269 to 280 (TSTTDESASSDA) has biased composition (low complexity). Residues 360 to 589 (DFACTILVLG…KLQETTAPGR (230 aa)) form the AIG1-type G domain. Residues 369–376 (GKTGVGKS) are G1. 372–377 (GVGKSS) lines the GTP pocket. A Mg(2+)-binding site is contributed by Ser-376. The tract at residues 395–399 (PSTNK) is G2. The segment at 416–419 (DTPG) is G3. The segment at 488-491 (THAS) is G4. Residues His-489 and 537-538 (EN) each bind GTP. The tract at residues 537–539 (ENH) is G5. 2 disordered regions span residues 616 to 659 (LPDE…EDLT) and 691 to 716 (EAKK…EAGN). The span at 620-643 (QAGESDESDDDEEEEDSDADDYDE) shows a compositional bias: acidic residues. A compositionally biased stretch (basic and acidic residues) spans 650-659 (LSKEELEDLT). The span at 705-714 (AEAEEAEDEA) shows a compositional bias: acidic residues. The helical transmembrane segment at 969 to 989 (MVLIGIVPILRSLINCRFGFG) threads the bilayer.

It belongs to the TRAFAC class TrmE-Era-EngA-EngB-Septin-like GTPase superfamily. AIG1/Toc34/Toc159-like paraseptin GTPase family. TOC159 subfamily. Part of the TOC core complex. The cofactor is Mg(2+).

Its subcellular location is the plastid. The protein resides in the chloroplast outer membrane. In terms of biological role, GTPase involved in protein precursor import into chloroplasts. Seems to recognize chloroplast-destined precursor proteins and regulate their presentation to the translocation channel through GTP hydrolysis. Probably specialized in the import of nuclear encoded non-photosynthetic preproteins from the cytoplasm to the chloroplast. The chain is Translocase of chloroplast 108, chloroplastic from Physcomitrium patens (Spreading-leaved earth moss).